A 165-amino-acid polypeptide reads, in one-letter code: Basic leucine zipper 43 (165 aa).

Residues 70 to 133 form the bZIP domain; that stretch reads NERKQKRKIS…EKVIEENVQL (64 aa). Residues 72–93 are basic motif; the sequence is RKQKRKISNRESARRSRMRKQR. The interval 98–112 is leucine-zipper; that stretch reads LWSQVMWLRDENHQL.

Forms heterodimers with BZIP34 and BZIP61.

The protein localises to the nucleus. Functionally, probable transcription factor involved in somatic embryogenesis. Acts as a positive regulator of BHLH109. The protein is Basic leucine zipper 43 of Arabidopsis thaliana (Mouse-ear cress).